The chain runs to 360 residues: Protein Wnt-2 (360 aa).

The N-terminal stretch at 1-25 is a signal peptide; it reads MNAPLGGIWLGLPLLLTWLSPEVSS. 11 disulfide bridges follow: Cys76-Cys87, Cys127-Cys135, Cys137-Cys157, Cys206-Cys220, Cys208-Cys215, Cys278-Cys309, Cys294-Cys304, Cys308-Cys348, Cys324-Cys339, Cys326-Cys336, and Cys331-Cys332. Residue Ser212 is the site of O-palmitoleoyl serine; by PORCN attachment. An N-linked (GlcNAc...) asparagine glycan is attached at Asn295.

It belongs to the Wnt family. Post-translationally, palmitoleoylation is required for efficient binding to frizzled receptors. Depalmitoleoylation leads to Wnt signaling pathway inhibition.

The protein resides in the secreted. Its subcellular location is the extracellular space. It localises to the extracellular matrix. In terms of biological role, ligand for members of the frizzled family of seven transmembrane receptors. Probable developmental protein. May be a signaling molecule which affects the development of discrete regions of tissues. Is likely to signal over only few cell diameters. The protein is Protein Wnt-2 (WNT2) of Oryctolagus cuniculus (Rabbit).